The sequence spans 463 residues: Bifunctional protein HldE (463 aa).

The interval 1–311 (MKQILVVGDL…EEIALILNQT (311 aa)) is ribokinase. 191–194 (NRIE) serves as a coordination point for ATP. D260 is an active-site residue. The tract at residues 334–463 (FTNGCFDILH…IERIKRTCND (130 aa)) is cytidylyltransferase.

This sequence in the N-terminal section; belongs to the carbohydrate kinase PfkB family. It in the C-terminal section; belongs to the cytidylyltransferase family. As to quaternary structure, homodimer.

The catalysed reaction is D-glycero-beta-D-manno-heptose 7-phosphate + ATP = D-glycero-beta-D-manno-heptose 1,7-bisphosphate + ADP + H(+). It carries out the reaction D-glycero-beta-D-manno-heptose 1-phosphate + ATP + H(+) = ADP-D-glycero-beta-D-manno-heptose + diphosphate. It participates in nucleotide-sugar biosynthesis; ADP-L-glycero-beta-D-manno-heptose biosynthesis; ADP-L-glycero-beta-D-manno-heptose from D-glycero-beta-D-manno-heptose 7-phosphate: step 1/4. The protein operates within nucleotide-sugar biosynthesis; ADP-L-glycero-beta-D-manno-heptose biosynthesis; ADP-L-glycero-beta-D-manno-heptose from D-glycero-beta-D-manno-heptose 7-phosphate: step 3/4. Its function is as follows. Catalyzes the phosphorylation of D-glycero-D-manno-heptose 7-phosphate at the C-1 position to selectively form D-glycero-beta-D-manno-heptose-1,7-bisphosphate. In terms of biological role, catalyzes the ADP transfer from ATP to D-glycero-beta-D-manno-heptose 1-phosphate, yielding ADP-D-glycero-beta-D-manno-heptose. This is Bifunctional protein HldE from Helicobacter pylori (strain Shi470).